The sequence spans 204 residues: UPF0228 protein MA_0511 (204 aa).

This sequence belongs to the UPF0228 family.

This chain is UPF0228 protein MA_0511, found in Methanosarcina acetivorans (strain ATCC 35395 / DSM 2834 / JCM 12185 / C2A).